A 462-amino-acid chain; its full sequence is UDP-N-acetylmuramoylalanine--D-glutamate ligase (462 aa).

120–126 (GTNGKTT) provides a ligand contact to ATP.

It belongs to the MurCDEF family.

It is found in the cytoplasm. It catalyses the reaction UDP-N-acetyl-alpha-D-muramoyl-L-alanine + D-glutamate + ATP = UDP-N-acetyl-alpha-D-muramoyl-L-alanyl-D-glutamate + ADP + phosphate + H(+). It participates in cell wall biogenesis; peptidoglycan biosynthesis. Its function is as follows. Cell wall formation. Catalyzes the addition of glutamate to the nucleotide precursor UDP-N-acetylmuramoyl-L-alanine (UMA). This is UDP-N-acetylmuramoylalanine--D-glutamate ligase from Bdellovibrio bacteriovorus (strain ATCC 15356 / DSM 50701 / NCIMB 9529 / HD100).